We begin with the raw amino-acid sequence, 181 residues long: Large ribosomal subunit protein eL18 (181 aa).

Residues 152 to 181 (WGKAPGQRGSHSAPYVRSEGRKFERAHGLK) are disordered. Positions 169–181 (SEGRKFERAHGLK) are enriched in basic and acidic residues.

This sequence belongs to the eukaryotic ribosomal protein eL18 family.

It localises to the cytoplasm. In Tetrahymena thermophila, this protein is Large ribosomal subunit protein eL18 (RPL18).